The primary structure comprises 447 residues: UDP-glycosyltransferase 79B10 (447 aa).

UDP-alpha-D-glucose is bound by residues S260, 319-321 (VQQ), 336-344 (HCGFGSMWE), and 358-361 (LADQ).

The protein belongs to the UDP-glycosyltransferase family.

In Arabidopsis thaliana (Mouse-ear cress), this protein is UDP-glycosyltransferase 79B10 (UGT79B10).